Here is a 60-residue protein sequence, read N- to C-terminus: UPF0434 protein NMA0874 (60 aa).

Belongs to the UPF0434 family.

This Neisseria meningitidis serogroup A / serotype 4A (strain DSM 15465 / Z2491) protein is UPF0434 protein NMA0874.